Consider the following 136-residue polypeptide: Transport protein particle 20 kDa subunit (136 aa).

This sequence belongs to the TRAPP small subunits family. Sedlin subfamily.

Its subcellular location is the cytoplasm. It localises to the golgi apparatus. The protein localises to the cis-Golgi network. It is found in the endoplasmic reticulum. Its function is as follows. Component of the TRAPP I and TRAPP II complexes. TRAPP I plays a key role in the late stages of endoplasmic reticulum to Golgi traffic. TRAPP II seems to play a role in intra-Golgi transport. This chain is Transport protein particle 20 kDa subunit (trs20), found in Schizosaccharomyces pombe (strain 972 / ATCC 24843) (Fission yeast).